A 108-amino-acid chain; its full sequence is Protein YcgL (108 aa).

In terms of domain architecture, YcgL spans 12–96 (MFCVIYRSSK…PPEDLLKQHL (85 aa)).

The sequence is that of Protein YcgL from Escherichia coli O127:H6 (strain E2348/69 / EPEC).